The sequence spans 395 residues: Proteinase-activated receptor 4 (395 aa).

A signal peptide spans 1–16 (MCWPLLYPLMLGFSIS). A propeptide spans 17–58 (PAECQTPSIYDDVESTREGQEASLRPTVELNESKSPDKPNPR) (removed for receptor activation). Residues 46–66 (LNESKSPDKPNPRGFPGKPCA) form a disordered region. The segment covering 47–56 (NESKSPDKPN) has biased composition (basic and acidic residues). Residues 59-93 (GFPGKPCANNSDTLELPASSEALLLGWVPTRLVPA) lie on the Extracellular side of the membrane. The N-linked (GlcNAc...) asparagine glycan is linked to Asn67. Residues 94-114 (IYGLVVVVGLPANGLALWVLA) form a helical membrane-spanning segment. Over 115–119 (TRVPR) the chain is Cytoplasmic. A helical membrane pass occupies residues 120-140 (LPSTILLMNLAVADLLLALVL). At 141-161 (PPRLVYHLRGQRWPFGEAACR) the chain is on the extracellular side. Cysteines 160 and 239 form a disulfide. The helical transmembrane segment at 162–182 (VATAALYGHMYGSVLLLAAVS) threads the bilayer. Residues 183-203 (LDRYLALVHSLRARALRGQRL) are Cytoplasmic-facing. The chain crosses the membrane as a helical span at residues 204–224 (TTILCLVAWLSAATLVLPLTF). The Extracellular segment spans residues 225–254 (HRQTFLLAGSDRMLCHDALPLAEQTSHWRP). The chain crosses the membrane as a helical span at residues 255–275 (AFICLAVLGCFVPLLAMVLCY). The Cytoplasmic segment spans residues 276-295 (GATLRALAANGQRYSHAVRL). Residues 296–316 (TALVLFSAVAAFTPSNVLLVL) traverse the membrane as a helical segment. Residues 317 to 330 (HYSNPSPEAWGNLY) lie on the Extracellular side of the membrane. A helical transmembrane segment spans residues 331-354 (GAYVPSLALSTLNSCVDPFIYYYV). At 355–395 (SHEFREKVRAMLCRQLKASSSSQASREAGSRGTAICSSTLL) the chain is on the cytoplasmic side.

The protein belongs to the G-protein coupled receptor 1 family. A proteolytic cleavage generates a new N-terminus that functions as a tethered ligand.

Its subcellular location is the cell membrane. Its function is as follows. Receptor for activated thrombin or trypsin coupled to G proteins that stimulate phosphoinositide hydrolysis. May play a role in platelets activation. This is Proteinase-activated receptor 4 (F2rl3) from Rattus norvegicus (Rat).